We begin with the raw amino-acid sequence, 203 residues long: Ras-related protein Rab-18 (203 aa).

GTP is bound by residues Ser-20, Gly-23, Lys-24, Ser-25, Ser-26, Asp-37, Pro-38, Thr-43, Gly-69, Lys-126, Asp-128, and Ala-155. An Effector region motif is present at residues 40–48 (QAATIGVDF). S-geranylgeranyl cysteine attachment occurs at residues Cys-201 and Cys-203. Cys-203 is modified (cysteine methyl ester).

Belongs to the small GTPase superfamily. Rab family.

It catalyses the reaction GTP + H2O = GDP + phosphate + H(+). Its function is as follows. The small GTPases Rab are key regulators of intracellular membrane trafficking, from the formation of transport vesicles to their fusion with membranes. Rabs cycle between an inactive GDP-bound form and an active GTP-bound form that is able to recruit to membranes different sets of downstream effectors directly responsible for vesicle formation, movement, tethering and fusion. Plays a role in apical endocytosis/recycling. May be implicated in transport between the plasma membrane and early endosomes. Plays a role in the shedding of pathogen spores from intestinal cells. This is Ras-related protein Rab-18 (rab-18) from Caenorhabditis elegans.